A 176-amino-acid chain; its full sequence is METQGASLSLGRWSLWLLLLGLVLPSASAQALSYREAVLRAVGQLNERSSEANLYRLLELDPAPNDEVDPGTRKPVSFTVKETVCPRTTQQPPEECDFKENGLVKQCVGTVTLDPSNDQFDINCNELQSVRFRPPIRRPPIRPPFRPPFRPPVRPPIRPPFRPPFRPPIGPFPGRR.

Positions 1–29 (METQGASLSLGRWSLWLLLLGLVLPSASA) are cleaved as a signal peptide. The residue at position 30 (Gln-30) is a Pyrrolidone carboxylic acid. Residues 30 to 130 (QALSYREAVL…DINCNELQSV (101 aa)) constitute a propeptide that is removed on maturation. 2 cysteine pairs are disulfide-bonded: Cys-85/Cys-96 and Cys-107/Cys-124. Residues 135 to 176 (PIRRPPIRPPFRPPFRPPVRPPIRPPFRPPFRPPIGPFPGRR) form a disordered region. The segment covering 141 to 176 (IRPPFRPPFRPPVRPPIRPPFRPPFRPPIGPFPGRR) has biased composition (pro residues). Pro-173 is modified (proline amide). A propeptide spans 174–176 (GRR) (removed in mature form).

It belongs to the cathelicidin family. In terms of processing, elastase is responsible for its maturation.

The protein localises to the secreted. Binds to the lipid A moiety of bacterial lipipolysaccharides (LPS), a glycolipid present in the outer membrane of all Gram-negative bacteria. Potent antimicrobial activity. This chain is Cathelicidin-2 (CATHL2), found in Ovis aries (Sheep).